The primary structure comprises 163 residues: NADH-quinone oxidoreductase subunit I (163 aa).

4Fe-4S ferredoxin-type domains lie at 54–84 and 94–123; these read LRRY…IDAE and TRYD…EGPN. Positions 64, 67, 70, 74, 103, 106, 109, and 113 each coordinate [4Fe-4S] cluster.

Belongs to the complex I 23 kDa subunit family. As to quaternary structure, NDH-1 is composed of at least 14 different subunits, Nqo1 to Nqo14. The complex has a L-shaped structure, with the hydrophobic arm (subunits Nqo7, Nqo8, Nqo10 to Nqo14) embedded in the inner membrane and the hydrophilic peripheral arm (subunits Nqo1 to Nqo6, Nqo9) protruding into the bacterial cytoplasm. The hydrophilic domain contains all the redox centers. NADH-quinone oxidoreductase forms a supercomplex with ubiquinol-cytochrome c reductase complex (complex III or cytochrome b-c1 complex) and cytochrome c oxidase (complex IV), which stabilizes the NADH-quinone oxidoreductase complex. [4Fe-4S] cluster serves as cofactor.

It is found in the cell inner membrane. It carries out the reaction a quinone + NADH + 5 H(+)(in) = a quinol + NAD(+) + 4 H(+)(out). In terms of biological role, NDH-1 shuttles electrons from NADH, via FMN and iron-sulfur (Fe-S) centers, to quinones in the respiratory chain. The immediate electron acceptor for the enzyme in this species is believed to be ubiquinone. Couples the redox reaction to proton translocation (for every two electrons transferred, four hydrogen ions are translocated across the cytoplasmic membrane), and thus conserves the redox energy in a proton gradient. The sequence is that of NADH-quinone oxidoreductase subunit I from Paracoccus denitrificans (strain Pd 1222).